The sequence spans 149 residues: Small ribosomal subunit protein eS19 (149 aa).

The protein belongs to the eukaryotic ribosomal protein eS19 family.

The chain is Small ribosomal subunit protein eS19 (RPS19) from Mya arenaria (Soft-shell clam).